The chain runs to 325 residues: Tetraacyldisaccharide 4'-kinase (325 aa).

Residue 54–61 (SVGGTGKT) participates in ATP binding.

It belongs to the LpxK family.

The catalysed reaction is a lipid A disaccharide + ATP = a lipid IVA + ADP + H(+). The protein operates within glycolipid biosynthesis; lipid IV(A) biosynthesis; lipid IV(A) from (3R)-3-hydroxytetradecanoyl-[acyl-carrier-protein] and UDP-N-acetyl-alpha-D-glucosamine: step 6/6. Functionally, transfers the gamma-phosphate of ATP to the 4'-position of a tetraacyldisaccharide 1-phosphate intermediate (termed DS-1-P) to form tetraacyldisaccharide 1,4'-bis-phosphate (lipid IVA). The sequence is that of Tetraacyldisaccharide 4'-kinase from Rickettsia felis (strain ATCC VR-1525 / URRWXCal2) (Rickettsia azadi).